A 194-amino-acid chain; its full sequence is Recombination protein RecR (194 aa).

A C4-type zinc finger spans residues 53–68; that stretch reads CEICFNLDVTSPCSIC. In terms of domain architecture, Toprim spans 76–171; that stretch reads SLLCIVEELG…KVTRLACGIP (96 aa).

The protein belongs to the RecR family.

Its function is as follows. May play a role in DNA repair. It seems to be involved in an RecBC-independent recombinational process of DNA repair. It may act with RecF and RecO. In Anaplasma phagocytophilum (strain HZ), this protein is Recombination protein RecR.